Reading from the N-terminus, the 192-residue chain is Anthranilate synthase component 2 (192 aa).

A Glutamine amidotransferase type-1 domain is found at 3 to 192 (NILLLDNIDS…LQRVIQWTKI (190 aa)). Residue 57-59 (GPG) coordinates L-glutamine. Catalysis depends on Cys-84, which acts as the Nucleophile; for GATase activity. L-glutamine-binding positions include Gln-88 and 134-135 (SL). Residues His-170 and Glu-172 each act as for GATase activity in the active site.

As to quaternary structure, heterotetramer consisting of two non-identical subunits: a beta subunit (TrpG) and a large alpha subunit (TrpE).

The enzyme catalyses chorismate + L-glutamine = anthranilate + pyruvate + L-glutamate + H(+). It functions in the pathway amino-acid biosynthesis; L-tryptophan biosynthesis; L-tryptophan from chorismate: step 1/5. Part of a heterotetrameric complex that catalyzes the two-step biosynthesis of anthranilate, an intermediate in the biosynthesis of L-tryptophan. In the first step, the glutamine-binding beta subunit (TrpG) of anthranilate synthase (AS) provides the glutamine amidotransferase activity which generates ammonia as a substrate that, along with chorismate, is used in the second step, catalyzed by the large alpha subunit of AS (TrpE) to produce anthranilate. In the absence of TrpG, TrpE can synthesize anthranilate directly from chorismate and high concentrations of ammonia. The polypeptide is Anthranilate synthase component 2 (trpG) (Buchnera aphidicola subsp. Baizongia pistaciae (strain Bp)).